We begin with the raw amino-acid sequence, 136 residues long: Ig heavy chain V region BCL1 (136 aa).

Residues 1-19 (MGWSCIIFFLVATATGVHS) form the signal peptide. The Ig-like domain maps to 20 to 135 (QVQLQQSGPE…WGQGTTLTVS (116 aa)).

The sequence is that of Ig heavy chain V region BCL1 from Mus musculus (Mouse).